A 215-amino-acid polypeptide reads, in one-letter code: UPF0502 protein YceH (215 aa).

This sequence belongs to the UPF0502 family.

The protein is UPF0502 protein YceH of Salmonella heidelberg (strain SL476).